A 40-amino-acid polypeptide reads, in one-letter code: Protamine-1 (40 aa).

Residues 1 to 40 (MPPRRKRVSSAPRRRRRTYRRTTAHKHQDRPVHRRRRRRH) form a disordered region.

Testis.

The protein localises to the nucleus. It is found in the chromosome. In terms of biological role, protamines substitute for histones in the chromatin of sperm during the haploid phase of spermatogenesis. They compact sperm DNA into a highly condensed, stable and inactive complex. This chain is Protamine-1 (PBP1), found in Bufo japonicus (Japanese common toad).